Consider the following 332-residue polypeptide: Adenine deaminase (332 aa).

Residues His-14, His-16, and His-194 each contribute to the Zn(2+) site. The Proton donor role is filled by Glu-197. Asp-275 is a Zn(2+) binding site. Residue Asp-276 coordinates substrate.

The protein belongs to the metallo-dependent hydrolases superfamily. Adenosine and AMP deaminases family. Adenine deaminase type 2 subfamily. Requires Zn(2+) as cofactor.

It catalyses the reaction adenine + H2O + H(+) = hypoxanthine + NH4(+). Its function is as follows. Catalyzes the hydrolytic deamination of adenine to hypoxanthine. Plays an important role in the purine salvage pathway and in nitrogen catabolism. In Psychrobacter cryohalolentis (strain ATCC BAA-1226 / DSM 17306 / VKM B-2378 / K5), this protein is Adenine deaminase.